Consider the following 209-residue polypeptide: Uracil phosphoribosyltransferase (209 aa).

5-phospho-alpha-D-ribose 1-diphosphate-binding positions include arginine 79, arginine 104, and 131 to 139 (DPMLATGGS). Uracil is bound by residues isoleucine 194 and 199–201 (GDA). Aspartate 200 provides a ligand contact to 5-phospho-alpha-D-ribose 1-diphosphate.

Belongs to the UPRTase family. Mg(2+) is required as a cofactor.

The enzyme catalyses UMP + diphosphate = 5-phospho-alpha-D-ribose 1-diphosphate + uracil. The protein operates within pyrimidine metabolism; UMP biosynthesis via salvage pathway; UMP from uracil: step 1/1. Allosterically activated by GTP. In terms of biological role, catalyzes the conversion of uracil and 5-phospho-alpha-D-ribose 1-diphosphate (PRPP) to UMP and diphosphate. The protein is Uracil phosphoribosyltransferase of Agathobacter rectalis (strain ATCC 33656 / DSM 3377 / JCM 17463 / KCTC 5835 / VPI 0990) (Eubacterium rectale).